The primary structure comprises 335 residues: F420-dependent glucose-6-phosphate dehydrogenase (335 aa).

Coenzyme F420-(gamma-Glu)n is bound at residue Asp40. The active-site Proton donor is the His41. Residues Thr77 and 108–109 each bind coenzyme F420-(gamma-Glu)n; that span reads TG. Residue Glu110 is the Proton acceptor of the active site. Coenzyme F420-(gamma-Glu)n contacts are provided by residues Asn113, 177-178, and 180-181; these read GG and VV. 4 residues coordinate substrate: Thr195, Lys198, Lys259, and Arg283.

The protein belongs to the F420-dependent glucose-6-phosphate dehydrogenase family. Homodimer.

The catalysed reaction is oxidized coenzyme F420-(gamma-L-Glu)(n) + D-glucose 6-phosphate + H(+) = 6-phospho-D-glucono-1,5-lactone + reduced coenzyme F420-(gamma-L-Glu)(n). Functionally, catalyzes the coenzyme F420-dependent oxidation of glucose 6-phosphate (G6P) to 6-phosphogluconolactone. The polypeptide is F420-dependent glucose-6-phosphate dehydrogenase (Segniliparus rotundus (strain ATCC BAA-972 / CDC 1076 / CIP 108378 / DSM 44985 / JCM 13578)).